An 891-amino-acid polypeptide reads, in one-letter code: DNA mismatch repair protein MutS (891 aa).

634–641 (GPNMGGKS) provides a ligand contact to ATP.

It belongs to the DNA mismatch repair MutS family.

Its function is as follows. This protein is involved in the repair of mismatches in DNA. It is possible that it carries out the mismatch recognition step. This protein has a weak ATPase activity. This Burkholderia pseudomallei (strain 1106a) protein is DNA mismatch repair protein MutS.